The chain runs to 528 residues: Neuronal acetylcholine receptor subunit alpha-2 (528 aa).

The first 23 residues, 1–23, serve as a signal peptide directing secretion; that stretch reads MGWPCRSIIPLLVWCFVTLQAAT. At 24–239 the chain is on the extracellular side; that stretch reads REQKQPHGFA…ITFYFVIRRL (216 aa). Asn-54 and Asn-104 each carry an N-linked (GlcNAc...) asparagine glycan. 2 disulfides stabilise this stretch: Cys-158-Cys-172 and Cys-222-Cys-223. The next 3 membrane-spanning stretches (helical) occupy residues 240–264, 272–290, and 306–327; these read PLFYTINLIIPCLLISCLTVLVFYL, ITLCISVLLSLTVFLLLIT, and YLLFTMIFVTLSIIITVFVLNV. At 328–501 the chain is on the cytoplasmic side; the sequence is HHRSPSTHTM…WKYVAMVIDR (174 aa). Over residues 390-410 the composition is skewed to acidic residues; that stretch reads DDKWEEEEEEEEEEEEEEEEE. Positions 390 to 427 are disordered; it reads DDKWEEEEEEEEEEEEEEEEEKAYPSRVPSGGSQGTQC. The helical transmembrane segment at 502–520 threads the bilayer; that stretch reads IFLWMFIIVCLLGTVGLFL.

This sequence belongs to the ligand-gated ion channel (TC 1.A.9) family. Acetylcholine receptor (TC 1.A.9.1) subfamily. Alpha-2/CHRNA2 sub-subfamily. In terms of assembly, neuronal AChR is composed of two different types of subunits: alpha and non-alpha (beta). CHRNA2/alpha-2 subunit can be combined to CHRNB2/beta-2 or CHRNB4/beta-4 to give rise to functional receptors. Both CHRNA2:CHRNB2 and CHRNA2:CHRNB4 nAChR complexes are heteropentamers with two subtypes: LS (low agonist sensitivity) with a (CHRNA2)3:(CHRNB2/4)2 and HS (high agonist sensitivity) with a (CHRNA2)2:(CHRNB2/4)3 stoichiometries; the subtypes differ in their subunit binding interfaces which are involved in ligand binding.

The protein resides in the synaptic cell membrane. Its subcellular location is the cell membrane. The enzyme catalyses Ca(2+)(in) = Ca(2+)(out). The catalysed reaction is K(+)(in) = K(+)(out). It catalyses the reaction Na(+)(in) = Na(+)(out). Component of neuronal acetylcholine receptors (nAChRs) that function as pentameric, ligand-gated cation channels with high calcium permeability among other activities. nAChRs are excitatory neurotrasnmitter receptors formed by a collection of nAChR subunits known to mediate synaptic transmission in the nervous system and the neuromuscular junction. Each nAchR subunit confers differential attributes to channel properties, including activation, deactivation and desensitization kinetics, pH sensitivity, cation permeability, and binding to allosteric modulators. CHRNA2 forms heteropentameric neuronal acetylcholine receptors with CHRNB2 and CHRNB4 and plays a role in nicotine dependence. This is Neuronal acetylcholine receptor subunit alpha-2 (CHRNA2) from Gallus gallus (Chicken).